Reading from the N-terminus, the 1058-residue chain is Protein HIR1 (1058 aa).

WD repeat units lie at residues 15 to 54 (QKKFEVYSVTVSPDNQRVATGGQDGKVRIWSAQSIRDSAK), 82 to 121 (THNGAVTVVRFSPDGRYLATGSDDRVVLVWERDSTKVPRK), 142 to 181 (AHDNDIQDLAWAPDSSILVTVGLDSGVIVWSGTTFEKIQR), 184 to 223 (AHNSHVKGITFDPANKFFATASDDRTVQIFRYNRASATDV), 239 to 282 (PLST…SDIS), 319 to 364 (DKES…PVVV), and 368 to 409 (MALK…YVVS). The disordered stretch occupies residues 49 to 73 (IRDSAKGDNESSDTPSNLSGAPAPG). Residues 307-327 (AEKKDKKSSSEKDKESDVIDV) are disordered. Disordered regions lie at residues 500–536 (LTAATSNPSTPAKPAKQKVTITKDGRKRVAPQLLTTT), 591–610 (RSDDLEDGSNGIQTALKKTR), 651–696 (RDAE…TPTK), and 1023–1058 (SSSKSAASKGSKDKEDNEEEDGDHDMTDFKDAMSEQ). Composition is skewed to polar residues over residues 661-678 (ESVSLANGENTSSSSAPH) and 687-696 (GSGNDQTPTK). The segment covering 1046 to 1058 (HDMTDFKDAMSEQ) has biased composition (basic and acidic residues).

The protein belongs to the WD repeat HIR1 family.

The protein localises to the nucleus. Required for replication-independent chromatin assembly and for the periodic repression of histone gene transcription during the cell cycle. This chain is Protein HIR1 (HIR1), found in Yarrowia lipolytica (strain CLIB 122 / E 150) (Yeast).